We begin with the raw amino-acid sequence, 146 residues long: D-aminoacyl-tRNA deacylase (146 aa).

The Gly-cisPro motif, important for rejection of L-amino acids motif lies at 137–138 (GP).

The protein belongs to the DTD family. Homodimer.

It localises to the cytoplasm. The enzyme catalyses glycyl-tRNA(Ala) + H2O = tRNA(Ala) + glycine + H(+). The catalysed reaction is a D-aminoacyl-tRNA + H2O = a tRNA + a D-alpha-amino acid + H(+). In terms of biological role, an aminoacyl-tRNA editing enzyme that deacylates mischarged D-aminoacyl-tRNAs. Also deacylates mischarged glycyl-tRNA(Ala), protecting cells against glycine mischarging by AlaRS. Acts via tRNA-based rather than protein-based catalysis; rejects L-amino acids rather than detecting D-amino acids in the active site. By recycling D-aminoacyl-tRNA to D-amino acids and free tRNA molecules, this enzyme counteracts the toxicity associated with the formation of D-aminoacyl-tRNA entities in vivo and helps enforce protein L-homochirality. The protein is D-aminoacyl-tRNA deacylase of Bacillus thuringiensis subsp. konkukian (strain 97-27).